The chain runs to 258 residues: Imidazole glycerol phosphate synthase subunit HisF (258 aa).

Catalysis depends on residues Asp11 and Asp130.

Belongs to the HisA/HisF family. As to quaternary structure, heterodimer of HisH and HisF.

It is found in the cytoplasm. The enzyme catalyses 5-[(5-phospho-1-deoxy-D-ribulos-1-ylimino)methylamino]-1-(5-phospho-beta-D-ribosyl)imidazole-4-carboxamide + L-glutamine = D-erythro-1-(imidazol-4-yl)glycerol 3-phosphate + 5-amino-1-(5-phospho-beta-D-ribosyl)imidazole-4-carboxamide + L-glutamate + H(+). The protein operates within amino-acid biosynthesis; L-histidine biosynthesis; L-histidine from 5-phospho-alpha-D-ribose 1-diphosphate: step 5/9. IGPS catalyzes the conversion of PRFAR and glutamine to IGP, AICAR and glutamate. The HisF subunit catalyzes the cyclization activity that produces IGP and AICAR from PRFAR using the ammonia provided by the HisH subunit. The chain is Imidazole glycerol phosphate synthase subunit HisF from Azorhizobium caulinodans (strain ATCC 43989 / DSM 5975 / JCM 20966 / LMG 6465 / NBRC 14845 / NCIMB 13405 / ORS 571).